Here is a 27-residue protein sequence, read N- to C-terminus: L-amino-acid oxidase (27 aa).

In terms of assembly, homodimer; non-covalently linked. Requires FAD as cofactor. In terms of processing, contains 2 disulfide bonds. N-glycosylated. Expressed by the venom gland.

The protein localises to the secreted. It carries out the reaction an L-alpha-amino acid + O2 + H2O = a 2-oxocarboxylate + H2O2 + NH4(+). It catalyses the reaction L-leucine + O2 + H2O = 4-methyl-2-oxopentanoate + H2O2 + NH4(+). In terms of biological role, catalyzes an oxidative deamination of predominantly hydrophobic and aromatic L-amino acids, thus producing hydrogen peroxide that may contribute to the diverse toxic effects of this enzyme. Shows activity on L-Leu. Exhibits diverse biological activities, such as hemolysis, edema, apoptosis, as well as induction of platelet aggregation. Effects of snake L-amino oxidases on platelets are controversial, since they either induce aggregation or inhibit agonist-induced aggregation. These different effects are probably due to different experimental conditions. Unlike other snake venom L-amino acid oxidases, does not induce hemorrhage. This protein may also have antibacterial and antiparasitic activities. In Eristicophis macmahoni (Leaf-nosed viper), this protein is L-amino-acid oxidase.